A 180-amino-acid polypeptide reads, in one-letter code: Thioredoxin 3 (180 aa).

The Cytoplasmic segment spans residues 1–3 (MAL). Residues 4–24 (ICIGSVCFSLFHIGVIILLII) traverse the membrane as a helical; Signal-anchor for type II membrane protein segment. The Lumenal segment spans residues 25–180 (NYFSSHIKKI…FQKYCLEKAK (156 aa)). A Thioredoxin domain is found at 29–176 (SHIKKIFPSF…IEKAFQKYCL (148 aa)). Catalysis depends on nucleophile residues C99 and C102. A disulfide bridge connects residues C99 and C102.

Belongs to the thioredoxin family. Post-translationally, the disulfide bond between Cys-99 and Cys-102 acts as a redox-active center and is reduced by thioredoxin reductase TRXR.

It is found in the endoplasmic reticulum membrane. Its function is as follows. Participates in various redox reactions through the reversible oxidation of its active center dithiol to a disulfide and catalyzes dithiol-disulfide exchange reactions. The protein is Thioredoxin 3 of Plasmodium falciparum (isolate 3D7).